We begin with the raw amino-acid sequence, 504 residues long: Anaerobic nitric oxide reductase transcription regulator NorR (504 aa).

4-aspartylphosphate is present on Asp-57. Positions 187–416 constitute a Sigma-54 factor interaction domain; it reads MIGLSPGMTQ…LEHAIHRAVV (230 aa). ATP-binding positions include 215–222 and 278–287; these read GETGTGKE and ADNGTLFLDE. The segment at residues 479–498 is a DNA-binding region (H-T-H motif); it reads WAACARMLETDVANLHRLAK.

It participates in nitrogen metabolism; nitric oxide reduction. Functionally, required for the expression of anaerobic nitric oxide (NO) reductase, acts as a transcriptional activator for at least the norVW operon. Activation also requires sigma-54. This Escherichia coli (strain SE11) protein is Anaerobic nitric oxide reductase transcription regulator NorR.